The primary structure comprises 290 residues: MSRSGARVERVPLARYTTLGVGGESEMWFVETHEQLAEAMSAPYRILGGGSNLVVSDSGVPERVLRLSGPLAERDLTPDPELSTPDLIVTGWVGGGVPLPGLIRALQKLGWSGLEGTVGIPGQVGGSVWMNAGTRFGEMFDGLHTIEIVTPDGVRQVTPDDLKWGYRQSGIPRGHVVSRVRLKLRPSTPEAVLAKMEHADQARKGQPKNKTPGCAFKNPGGVSAGKLIDEAGLKGTQVGNARIAPEHGNFIVNLGGATAADVHALLALIRERVGVPLELEYELWPEQLGG.

The 168-residue stretch at 20–187 (GVGGESEMWF…SRVRLKLRPS (168 aa)) folds into the FAD-binding PCMH-type domain. Residue Arg-167 is part of the active site.

It belongs to the MurB family. Requires FAD as cofactor.

The protein resides in the cytoplasm. It catalyses the reaction UDP-N-acetyl-alpha-D-muramate + NADP(+) = UDP-N-acetyl-3-O-(1-carboxyvinyl)-alpha-D-glucosamine + NADPH + H(+). Its pathway is cell wall biogenesis; peptidoglycan biosynthesis. Its function is as follows. Cell wall formation. In Deinococcus radiodurans (strain ATCC 13939 / DSM 20539 / JCM 16871 / CCUG 27074 / LMG 4051 / NBRC 15346 / NCIMB 9279 / VKM B-1422 / R1), this protein is UDP-N-acetylenolpyruvoylglucosamine reductase.